Here is a 1281-residue protein sequence, read N- to C-terminus: Protein ETHYLENE-INSENSITIVE 2 (1281 aa).

Topologically, residues 1 to 21 (MDGQQLRSSESPASGGGGVTG) are cytoplasmic. Residues 22–42 (GGAPHLFHALGPALLISIGYI) form a helical membrane-spanning segment. The Extracellular portion of the chain corresponds to 43-61 (DLGKWVAAVEAGSRFGLDL). Residues 62 to 82 (VLLALLFNFMAILCQYLAACI) form a helical membrane-spanning segment. Topologically, residues 83 to 112 (GTVTGRSLAEICHQEYSRPTCIFLGVQAGL) are cytoplasmic. Residues 113–133 (SLLTSELTMIFGIALGFNLLF) form a helical membrane-spanning segment. At 134-137 (EYDD) the chain is on the extracellular side. A helical membrane pass occupies residues 138–158 (LITGICFATVVPNLLPYAISH). Over 159–163 (LGKKM) the chain is Cytoplasmic. Residues 164–184 (VGTLNACIAGFALLCYVLGLL) form a helical membrane-spanning segment. Over 185–208 (VSQPQIPLTTNVIFPKLSGESAYS) the chain is Extracellular. The chain crosses the membrane as a helical span at residues 209–229 (LMALLGANVMAHNFYIHSSVV). Topologically, residues 230-238 (QGQKRSAFA) are cytoplasmic. A helical membrane pass occupies residues 239–259 (VGALFHDHLFSVLFIFTGIFL). The Extracellular segment spans residues 260–297 (VNHVLMNSAAADSTNTLLLTFQDVVELMNQIFVNPMAP). A helical transmembrane segment spans residues 298–318 (TIFLVVLLFSSHIISLTSAIG). Over 319 to 325 (SQVISQH) the chain is Cytoplasmic. Residues 326–346 (LFGINLPLSGHHLILKAFAIV) traverse the membrane as a helical segment. At 347-362 (PALYCAKVAGAEGIYQ) the chain is on the extracellular side. A helical membrane pass occupies residues 363-383 (LLIICQIIQAMLLPSSVVPLF). The Cytoplasmic segment spans residues 384 to 400 (RVASSRLIMGAHRVSLH). Residues 401–421 (LEILTFLAFLLMLFSNIIFMA) form a helical membrane-spanning segment. Over 422–447 (EMLFGDSGWLNTLKGNTGSPVVFPST) the chain is Extracellular. A helical membrane pass occupies residues 448–468 (VLITVACVSVAFSLYMAVTPL). Topologically, residues 469 to 1281 (KSGSHEAELQ…KRRLSSKGQQ (813 aa)) are cytoplasmic. 2 disordered regions span residues 540–565 (IESDHDSQHSTAHTSTAPESCHSPSF) and 593–665 (ESTV…NGSG). Residues 548–557 (HSTAHTSTAP) are compositionally biased toward polar residues. The segment covering 599–610 (VDSKSTGERDIE) has biased composition (basic and acidic residues).

It belongs to the NRAMP (TC 2.A.55) family. As to expression, expressed in roots, leaf sheaths, leaf blades, flowers, developing seeds, germinating seeds and young seedlings. Expressed in adventitious roots, vascular tissues of the seminal roots, lateral roots, the connecting region between vascular tissues and lateral roots, mature leaf, mature stem, tips of adventitious roots derived from the node, shoot apex, young panicle, anthers, pistil, stigma, ovary, seed coat and fruit coat pericarp.

Its subcellular location is the membrane. Its function is as follows. Central factor in ethylene signaling pathways that control development, senescence and grain size. Acts as a positive component of the ethylene-signaling pathway. This chain is Protein ETHYLENE-INSENSITIVE 2, found in Oryza sativa subsp. japonica (Rice).